A 196-amino-acid polypeptide reads, in one-letter code: Heat shock protein beta-8 (196 aa).

A disordered region spans residues Met-1–Gly-34. Residues Asp-23 to Gly-34 are compositionally biased toward low complexity. Residues Ser-24 and Ser-57 each carry the phosphoserine modification. Thr-63 carries the post-translational modification Phosphothreonine. 2 positions are modified to asymmetric dimethylarginine: Arg-71 and Arg-78. The 112-residue stretch at Thr-74–Glu-185 folds into the sHSP domain. Position 87 is a phosphoserine (Ser-87). The tract at residues Pro-176–Thr-196 is disordered. The span at Gly-178 to Thr-196 shows a compositional bias: polar residues.

The protein belongs to the small heat shock protein (HSP20) family. Monomer. Forms a ternary complex with BAG3 and HSPA1A. Component of the chaperone-assisted selective autophagy (CASA) complex consisting of BAG3, HSPA8/HSC70, HSPB8 and STUB1/CHIP. Interacts with HSPB1. Interacts with DNAJB6. Interacts with BAG3. Post-translationally, phosphorylated.

It is found in the cytoplasm. The protein resides in the nucleus. Its function is as follows. Involved in the chaperone-assisted selective autophagy (CASA), a crucial process for protein quality control, particularly in mechanical strained cells and tissues such as muscle. Displays temperature-dependent chaperone activity. This chain is Heat shock protein beta-8 (HSPB8), found in Bos taurus (Bovine).